We begin with the raw amino-acid sequence, 98 residues long: C-X-C motif chemokine 10 (98 aa).

The N-terminal stretch at 1–21 (MNQTAILICCLVFLTLSGIQG) is a signal peptide. Citrulline is present on Arg-26. Disulfide bonds link Cys-30-Cys-57 and Cys-32-Cys-74.

It belongs to the intercrine alpha (chemokine CxC) family.

The protein localises to the secreted. Its function is as follows. Chemotactic for monocytes and T-lymphocytes. Binds to CXCR3. This Macaca nemestrina (Pig-tailed macaque) protein is C-X-C motif chemokine 10 (CXCL10).